The chain runs to 261 residues: Cytochrome c oxidase subunit 3 (261 aa).

Residues methionine 1–proline 15 are Mitochondrial matrix-facing. Residues tryptophan 16–tryptophan 34 form a helical membrane-spanning segment. Residues phenylalanine 35–threonine 40 lie on the Mitochondrial intermembrane side of the membrane. A helical transmembrane segment spans residues isoleucine 41–threonine 66. Over phenylalanine 67–threonine 72 the chain is Mitochondrial matrix. The helical transmembrane segment at proline 73–serine 105 threads the bilayer. The Mitochondrial intermembrane portion of the chain corresponds to leucine 106 to glutamate 128. The helical transmembrane segment at valine 129–methionine 152 threads the bilayer. Topologically, residues glutamate 153–asparagine 155 are mitochondrial matrix. The chain crosses the membrane as a helical span at residues arginine 156–glutamate 183. Residues alanine 184–aspartate 190 lie on the Mitochondrial intermembrane side of the membrane. Residues glycine 191–leucine 223 traverse the membrane as a helical segment. The Mitochondrial matrix portion of the chain corresponds to lysine 224–histidine 232. The chain crosses the membrane as a helical span at residues phenylalanine 233–isoleucine 256. The Mitochondrial intermembrane portion of the chain corresponds to tyrosine 257–serine 261.

Belongs to the cytochrome c oxidase subunit 3 family. Component of the cytochrome c oxidase (complex IV, CIV), a multisubunit enzyme composed of 14 subunits. The complex is composed of a catalytic core of 3 subunits MT-CO1, MT-CO2 and MT-CO3, encoded in the mitochondrial DNA, and 11 supernumerary subunits COX4I, COX5A, COX5B, COX6A, COX6B, COX6C, COX7A, COX7B, COX7C, COX8 and NDUFA4, which are encoded in the nuclear genome. The complex exists as a monomer or a dimer and forms supercomplexes (SCs) in the inner mitochondrial membrane with NADH-ubiquinone oxidoreductase (complex I, CI) and ubiquinol-cytochrome c oxidoreductase (cytochrome b-c1 complex, complex III, CIII), resulting in different assemblies (supercomplex SCI(1)III(2)IV(1) and megacomplex MCI(2)III(2)IV(2)).

It is found in the mitochondrion inner membrane. The catalysed reaction is 4 Fe(II)-[cytochrome c] + O2 + 8 H(+)(in) = 4 Fe(III)-[cytochrome c] + 2 H2O + 4 H(+)(out). Functionally, component of the cytochrome c oxidase, the last enzyme in the mitochondrial electron transport chain which drives oxidative phosphorylation. The respiratory chain contains 3 multisubunit complexes succinate dehydrogenase (complex II, CII), ubiquinol-cytochrome c oxidoreductase (cytochrome b-c1 complex, complex III, CIII) and cytochrome c oxidase (complex IV, CIV), that cooperate to transfer electrons derived from NADH and succinate to molecular oxygen, creating an electrochemical gradient over the inner membrane that drives transmembrane transport and the ATP synthase. Cytochrome c oxidase is the component of the respiratory chain that catalyzes the reduction of oxygen to water. Electrons originating from reduced cytochrome c in the intermembrane space (IMS) are transferred via the dinuclear copper A center (CU(A)) of subunit 2 and heme A of subunit 1 to the active site in subunit 1, a binuclear center (BNC) formed by heme A3 and copper B (CU(B)). The BNC reduces molecular oxygen to 2 water molecules using 4 electrons from cytochrome c in the IMS and 4 protons from the mitochondrial matrix. The polypeptide is Cytochrome c oxidase subunit 3 (MT-CO3) (Eudorcas rufifrons (Red-fronted gazelle)).